A 201-amino-acid polypeptide reads, in one-letter code: Large ribosomal subunit protein uL4 (201 aa).

A disordered region spans residues 45 to 72; sequence AQKTRAEVTGSGKKPWRQKGTGRARAGS.

This sequence belongs to the universal ribosomal protein uL4 family. Part of the 50S ribosomal subunit.

In terms of biological role, one of the primary rRNA binding proteins, this protein initially binds near the 5'-end of the 23S rRNA. It is important during the early stages of 50S assembly. It makes multiple contacts with different domains of the 23S rRNA in the assembled 50S subunit and ribosome. Functionally, forms part of the polypeptide exit tunnel. This is Large ribosomal subunit protein uL4 from Shewanella baltica (strain OS223).